A 715-amino-acid chain; its full sequence is MAANMYRVGDYVYFENSSSNPYLIRRIEELNKTANGNVEAKVVCFYRRRDISSTLIALADKHATLSVCYKAGPGADNGEEGEIEEEMENPEMVDLPEKLKHQLRHRELFLSRQLESLPATHIRGKCSVTLLNETESLKSYLEREDFFFYSLVYDPQQKTLLADKGEIRVGNRYQADITDLLKEGEEDGRDQSRLETQVWEAHNPLTDKQIDQFLVVARSVGTFARALDCSSSVRQPSLHMSAAAASRDITLFHAMDTLHKNIYDISKAISALVPQGGPVLCRDEMEEWSASEANLFEEALEKYGKDFTDIQQDFLPWKSLTSIIEYYYMWKTTDRYVQQKRLKAAEAESKLKQVYIPNYNKPNPNQISVNNVKAGVVNGTGAPGQSPGAGRACESCYTTQSYQWYSWGPPNMQCRLCASCWTYWKKYGGLKMPTRLDGERPGPNRSNMSPHGLPARSSGSPKFAMKTRQAFYLHTTKLTRIARRLCREILRPWHAARHPYLPINSAAIKAECTARLPEASQSPLVLKQAVRKPLEAVLRYLETHPRPPKPDPVKSVSSVLSSLTPAKVAPVINNGSPTILGKRSYEQHNGVDGNMKKRLLMPSRGLANHGQARHMGPSRNLLLNGKSYPTKVRLIRGGSLPPVKRRRMNWIDAPDDVFYMATEETRKIRKLLSSSETKRAARRPYKPIALRQSQALPPRPPPPAPVNDEPIVIED.

One can recognise a BAH domain in the interval Met-1–Lys-164. In terms of domain architecture, ELM2 spans Gly-165 to Gly-276. Lys-182 participates in a covalent cross-link: Glycyl lysine isopeptide (Lys-Gly) (interchain with G-Cter in ubiquitin). The region spanning Asp-283–Arg-335 is the SANT domain. Ser-386 carries the phosphoserine modification. A GATA-type; atypical zinc finger spans residues Cys-393–Cys-420. Positions Arg-435–Ser-460 are disordered. 2 positions are modified to phosphoserine: Ser-446 and Ser-449. Lys-509 is covalently cross-linked (Glycyl lysine isopeptide (Lys-Gly) (interchain with G-Cter in SUMO2 and SUMO3)). Ser-522 is subject to Phosphoserine. Residues Pro-545–Pro-552 carry the SH3-binding motif. A Glycyl lysine isopeptide (Lys-Gly) (interchain with G-Cter in SUMO2) cross-link involves residue Lys-549. Position 564 is a phosphothreonine (Thr-564). Ser-576 is subject to Phosphoserine. A Phosphothreonine modification is found at Thr-578. Lys-626 carries the post-translational modification N6-acetyllysine; alternate. A Glycyl lysine isopeptide (Lys-Gly) (interchain with G-Cter in ubiquitin); alternate cross-link involves residue Lys-626. Position 639 is a phosphoserine (Ser-639). Residues Asp-656–Lys-686 form an interaction with RBBP4 region. The tract at residues Ser-673 to Asp-715 is disordered. An SH3-binding motif is present at residues Leu-696 to Pro-705. The SUMO interaction motif 1 (SIM); crucial for efficient sumoylation signature appears at Ile-711–Asp-715.

It belongs to the metastasis-associated protein family. As to quaternary structure, component of the nucleosome remodeling and deacetylase (NuRD) repressor complex, composed of core proteins MTA1, MTA2, MTA3, RBBP4, RBBP7, HDAC1, HDAC2, MBD2, MBD3, and peripherally associated proteins CDK2AP1, CDK2AP2, GATAD2A, GATAD2B, CHD3, CHD4 and CHD5. The exact stoichiometry of the NuRD complex is unknown, and some subunits such as MBD2 and MBD3, GATAD2A and GATAD2B, and CHD3, CHD4 and CHD5 define mutually exclusive NuRD complexes. Interacts with RBBP4; the interaction is direct. Interacts with BMAL1. Interacts with CLOCK. Interacts with COP1. Interacts with CSNK1G2 in the cytoplasm. Interacts with EP300. Interacts with HDAC2. Interacts with IFI16. Interacts with ITGB3BP/CENPR. Interacts with MBD3L2. Interacts with MDM2. Interacts with NACC2. Interacts with p53/TP53. Interacts with PIAS1. Interacts with PIAS3. Interacts with PIAS4. Interacts with PWWP2A. Interacts with PWWP2B. Interacts with SENP1. Interacts with SENP2. Interacts with SIX3; facilitates the binding of SIX3 to the core DNA motif of SIX3 promoter. Interacts with SUMO1. Interacts with SUMO2. Interacts with TFCP2L1; which is indispensable for TFCP2L1-mediated self-renewal-promoting effect and endoderm-inhibiting action. Interacts with TFAP2C. Interacts with TPR. Interacts with UBE2I/UBC9. Phosphorylation by CSNK1G2/CK1 triggered by estrogen enhances corepression of estrogen receptor (ER). Post-translationally, acetylation is essential for its transcriptional coactivator activity. In terms of processing, sumoylation positively regulates its transcriptional corepressor activity but does not affect the protein stability. Sumoylated preferentially by SUMO2 or SUMO3 than SUMO1. Sumoylation is enhanced by PIAS1/3/4 and preferentially sumoylated by SUMO2 in the presence of PIAS1/3/4. Desumoylated by SENP1. Ubiquitinated by COP1, which leads to proteasomal degradation. In terms of tissue distribution, widely expressed. High expression in brain, liver, kidney, and cardiac muscle, ovaries, adrenal glands and virgin mammary glands. Higher in tumors than in adjacent normal tissue from the same individual. Up-regulated in a wide variety of cancers including breast, liver, ovarian, and colorectal cancer and its expression levels are closely correlated with tumor aggressiveness and metastasis.

Its subcellular location is the nucleus. It is found in the cytoplasm. It localises to the nucleus envelope. The protein resides in the cytoskeleton. In terms of biological role, transcriptional coregulator which can act as both a transcriptional corepressor and coactivator. Acts as a component of the histone deacetylase NuRD complex which participates in the remodeling of chromatin. In the NuRD complex, regulates transcription of its targets by modifying the acetylation status of the target chromatin and cofactor accessibility to the target DNA. In conjunction with other components of NuRD, acts as a transcriptional corepressor of BRCA1, ESR1, TFF1 and CDKN1A. Acts as a transcriptional coactivator of BCAS3, and SUMO2, independent of the NuRD complex. Stimulates the expression of WNT1 by inhibiting the expression of its transcriptional corepressor SIX3. Regulates p53-dependent and -independent DNA repair processes following genotoxic stress. Regulates the stability and function of p53/TP53 by inhibiting its ubiquitination by COP1 and MDM2 thereby regulating the p53-dependent DNA repair. Plays a role in the regulation of the circadian clock and is essential for the generation and maintenance of circadian rhythms under constant light and for normal entrainment of behavior to light-dark (LD) cycles. Positively regulates the CLOCK-BMAL1 heterodimer mediated transcriptional activation of its own transcription and the transcription of CRY1. Regulates deacetylation of BMAL1 by regulating SIRT1 expression, resulting in derepressing CRY1-mediated transcription repression. With TFCP2L1, promotes establishment and maintenance of pluripotency in embryonic stem cells (ESCs) and inhibits endoderm differentiation. Functionally, binds to ESR1 and sequesters it in the cytoplasm and enhances its non-genomic responses. The sequence is that of Metastasis-associated protein MTA1 (MTA1) from Homo sapiens (Human).